Consider the following 264-residue polypeptide: Lysosomal-associated transmembrane protein 5 (264 aa).

Transmembrane regions (helical) follow at residues 19–39, 64–84, 92–112, 136–156, and 186–206; these read IATTALAIYHVIMSVLLFIEH, VSSFLLITMLFIISLSLLVGV, LLPFLSLQIMDFLLCLLTLMG, VPLMTLQLLDFCLSILTLCSS, and FIKIMIIFSIAFITVLILKVY. Y261 carries the post-translational modification Phosphotyrosine.

The protein belongs to the LAPTM4/LAPTM5 transporter family. In terms of assembly, binds to ubiquitin.

The protein localises to the lysosome membrane. Its function is as follows. May have a special functional role during embryogenesis and in adult hematopoietic cells. This Bos taurus (Bovine) protein is Lysosomal-associated transmembrane protein 5 (LAPTM5).